A 169-amino-acid polypeptide reads, in one-letter code: Translationally-controlled tumor protein homolog (169 aa).

A TCTP domain is found at 1-169; it reads MIIYKDIVSG…FKDGLEEEKF (169 aa).

Belongs to the TCTP family.

It localises to the cytoplasm. Its function is as follows. Involved in calcium binding and microtubule stabilization. This is Translationally-controlled tumor protein homolog from Branchiostoma belcheri (Amphioxus).